Consider the following 410-residue polypeptide: NADH-quinone oxidoreductase subunit H (410 aa).

9 helical membrane passes run 11-31, 79-99, 119-139, 160-180, 192-212, 257-277, 283-303, 317-337, and 347-367; these read LVAA…LVAI, FVYF…FAFI, LPVA…GIVL, VISY…MAGT, GVWY…SMVG, ALAA…NMWA, WWPL…YFWL, ALGW…AAII, and YWTP…VLLL. The disordered stretch occupies residues 376–410; it reads ARASARQRGDEGTSPEPAFPTPPLLAGATKENAGG.

It belongs to the complex I subunit 1 family. As to quaternary structure, NDH-1 is composed of 14 different subunits. Subunits NuoA, H, J, K, L, M, N constitute the membrane sector of the complex.

Its subcellular location is the cell membrane. The enzyme catalyses a quinone + NADH + 5 H(+)(in) = a quinol + NAD(+) + 4 H(+)(out). NDH-1 shuttles electrons from NADH, via FMN and iron-sulfur (Fe-S) centers, to quinones in the respiratory chain. The immediate electron acceptor for the enzyme in this species is believed to be menaquinone. Couples the redox reaction to proton translocation (for every two electrons transferred, four hydrogen ions are translocated across the cytoplasmic membrane), and thus conserves the redox energy in a proton gradient. The chain is NADH-quinone oxidoreductase subunit H from Mycobacterium bovis (strain ATCC BAA-935 / AF2122/97).